Here is a 102-residue protein sequence, read N- to C-terminus: Small ribosomal subunit protein uS10 (102 aa).

This sequence belongs to the universal ribosomal protein uS10 family. In terms of assembly, part of the 30S ribosomal subunit.

Functionally, involved in the binding of tRNA to the ribosomes. The sequence is that of Small ribosomal subunit protein uS10 from Mycoplasma mycoides subsp. mycoides SC (strain CCUG 32753 / NCTC 10114 / PG1).